Reading from the N-terminus, the 281-residue chain is Ribosomal protein L11 methyltransferase (281 aa).

Threonine 133, glycine 154, aspartate 175, and asparagine 216 together coordinate S-adenosyl-L-methionine.

This sequence belongs to the methyltransferase superfamily. PrmA family.

Its subcellular location is the cytoplasm. It catalyses the reaction L-lysyl-[protein] + 3 S-adenosyl-L-methionine = N(6),N(6),N(6)-trimethyl-L-lysyl-[protein] + 3 S-adenosyl-L-homocysteine + 3 H(+). Methylates ribosomal protein L11. The sequence is that of Ribosomal protein L11 methyltransferase from Campylobacter jejuni (strain RM1221).